A 408-amino-acid chain; its full sequence is 8-amino-7-oxononanoate synthase (408 aa).

Substrate is bound at residue R20. Pyridoxal 5'-phosphate is bound at residue 117-118 (GY). A substrate-binding site is contributed by H142. Residues S188, H216, and T244 each contribute to the pyridoxal 5'-phosphate site. K247 bears the N6-(pyridoxal phosphate)lysine mark. Position 367 (T367) interacts with substrate.

Belongs to the class-II pyridoxal-phosphate-dependent aminotransferase family. BioF subfamily. Homodimer. Requires pyridoxal 5'-phosphate as cofactor.

The catalysed reaction is 6-carboxyhexanoyl-[ACP] + L-alanine + H(+) = (8S)-8-amino-7-oxononanoate + holo-[ACP] + CO2. The protein operates within cofactor biosynthesis; biotin biosynthesis. Catalyzes the decarboxylative condensation of pimeloyl-[acyl-carrier protein] and L-alanine to produce 8-amino-7-oxononanoate (AON), [acyl-carrier protein], and carbon dioxide. This chain is 8-amino-7-oxononanoate synthase, found in Cupriavidus pinatubonensis (strain JMP 134 / LMG 1197) (Cupriavidus necator (strain JMP 134)).